We begin with the raw amino-acid sequence, 320 residues long: ATP-dependent 6-phosphofructokinase (320 aa).

ATP is bound at residue glycine 12. Residues 22–26 (RGVVR) and 55–60 (RYSVSD) contribute to the ADP site. ATP-binding positions include 73-74 (RF) and 103-106 (GDGS). Aspartate 104 is a Mg(2+) binding site. Position 126–128 (126–128 (TID)) interacts with substrate. Catalysis depends on aspartate 128, which acts as the Proton acceptor. Arginine 155 is a binding site for ADP. Substrate contacts are provided by residues arginine 163 and 170 to 172 (MGR). ADP contacts are provided by residues 186–188 (GCE), lysine 212, and 214–216 (KKH). Substrate is bound by residues glutamate 223, arginine 244, and 250-253 (HIQR).

It belongs to the phosphofructokinase type A (PFKA) family. ATP-dependent PFK group I subfamily. Prokaryotic clade 'B1' sub-subfamily. In terms of assembly, homotetramer. Mg(2+) is required as a cofactor.

Its subcellular location is the cytoplasm. It carries out the reaction beta-D-fructose 6-phosphate + ATP = beta-D-fructose 1,6-bisphosphate + ADP + H(+). The protein operates within carbohydrate degradation; glycolysis; D-glyceraldehyde 3-phosphate and glycerone phosphate from D-glucose: step 3/4. With respect to regulation, allosterically activated by ADP and other diphosphonucleosides, and allosterically inhibited by phosphoenolpyruvate. Functionally, catalyzes the phosphorylation of D-fructose 6-phosphate to fructose 1,6-bisphosphate by ATP, the first committing step of glycolysis. This chain is ATP-dependent 6-phosphofructokinase, found in Salmonella agona (strain SL483).